The following is a 425-amino-acid chain: Serine--tRNA ligase (425 aa).

233–235 (TAE) provides a ligand contact to L-serine. 264–266 (RRE) is an ATP binding site. Glu287 contributes to the L-serine binding site. 351–354 (EISS) contacts ATP. Residue Ser385 coordinates L-serine.

Belongs to the class-II aminoacyl-tRNA synthetase family. Type-1 seryl-tRNA synthetase subfamily. In terms of assembly, homodimer. The tRNA molecule binds across the dimer.

It is found in the cytoplasm. It catalyses the reaction tRNA(Ser) + L-serine + ATP = L-seryl-tRNA(Ser) + AMP + diphosphate + H(+). The enzyme catalyses tRNA(Sec) + L-serine + ATP = L-seryl-tRNA(Sec) + AMP + diphosphate + H(+). The protein operates within aminoacyl-tRNA biosynthesis; selenocysteinyl-tRNA(Sec) biosynthesis; L-seryl-tRNA(Sec) from L-serine and tRNA(Sec): step 1/1. Its function is as follows. Catalyzes the attachment of serine to tRNA(Ser). Is also able to aminoacylate tRNA(Sec) with serine, to form the misacylated tRNA L-seryl-tRNA(Sec), which will be further converted into selenocysteinyl-tRNA(Sec). This chain is Serine--tRNA ligase, found in Prochlorococcus marinus (strain MIT 9515).